The chain runs to 233 residues: Pyridoxal 5'-phosphate synthase subunit PdxT (233 aa).

Residue 61-63 coordinates L-glutamine; the sequence is GES. Cys-93 functions as the Nucleophile in the catalytic mechanism. L-glutamine contacts are provided by residues Arg-127 and 163–164; that span reads IR. Catalysis depends on charge relay system residues His-212 and Glu-214.

Belongs to the glutaminase PdxT/SNO family. As to quaternary structure, in the presence of PdxS, forms a dodecamer of heterodimers. Only shows activity in the heterodimer.

It catalyses the reaction aldehydo-D-ribose 5-phosphate + D-glyceraldehyde 3-phosphate + L-glutamine = pyridoxal 5'-phosphate + L-glutamate + phosphate + 3 H2O + H(+). The enzyme catalyses L-glutamine + H2O = L-glutamate + NH4(+). It participates in cofactor biosynthesis; pyridoxal 5'-phosphate biosynthesis. Functionally, catalyzes the hydrolysis of glutamine to glutamate and ammonia as part of the biosynthesis of pyridoxal 5'-phosphate. The resulting ammonia molecule is channeled to the active site of PdxS. The sequence is that of Pyridoxal 5'-phosphate synthase subunit PdxT from Paenarthrobacter aurescens (strain TC1).